The chain runs to 614 residues: Maltose permease MAL61 (614 aa).

Residues 1-48 (MKGLSSLINRKKDRNDSHLDEIENGVNATEFNSIEMEEQGKKSDFDLS) are disordered. Topologically, residues 1-108 (MKGLSSLINR…AAAWSLLVST (108 aa)) are cytoplasmic. Residues 38-48 (EQGKKSDFDLS) are compositionally biased toward basic and acidic residues. Residues 109 to 129 (TLIQEGYDTAILGAFYALPVF) form a helical membrane-spanning segment. At 130-144 (QKKYGSLNSNTGDYE) the chain is on the extracellular side. A helical membrane pass occupies residues 145 to 165 (ISVSWQIGLCLCYMAGEIVGL). Topologically, residues 166 to 180 (QVTGPSVDYMGNRYT) are cytoplasmic. A helical membrane pass occupies residues 181-201 (LIMALFFLAAFIFILYFCKSL). Position 202 (G202) is a topological domain, extracellular. Residues 203 to 223 (MIAVGQALCGMPWGCFQCLTV) traverse the membrane as a helical segment. Residues 224–236 (SYASEICPLALRY) lie on the Cytoplasmic side of the membrane. The helical transmembrane segment at 237-257 (YLTTYSNLCWTFGQLFAAGIM) threads the bilayer. Over 258–272 (KNSQNKYANSELGYK) the chain is Extracellular. The chain crosses the membrane as a helical span at residues 273–293 (LPFALQWIWPLPLAVGIFLAP). The Cytoplasmic segment spans residues 294–364 (ESPWWLVKKG…KDGINRRRTR (71 aa)). Residues 365 to 385 (IACLCWIGQCSCGASLIGYST) traverse the membrane as a helical segment. The Extracellular segment spans residues 386 to 398 (YFYEKAGVSTDTA). Residues 399 to 419 (FTFSIIQYCLGIAATFVSWWA) form a helical membrane-spanning segment. Topologically, residues 420–427 (SKYCGRFD) are cytoplasmic. The helical transmembrane segment at 428-448 (LYAFGLAFQAIMFFIIGGLGC) threads the bilayer. The Extracellular segment spans residues 449-460 (SDTHGAKMGSGA). Residues 461-481 (LLMVVAFFYNLGIAPVVFCLV) form a helical membrane-spanning segment. At 482–493 (SEMPSSRLRTKT) the chain is on the cytoplasmic side. The chain crosses the membrane as a helical span at residues 494-514 (IILARNAYNVIQVVVTVLIMY). At 515 to 526 (QLNSEKWNWGAK) the chain is on the extracellular side. A helical transmembrane segment spans residues 527–547 (SGFFWGGFCLATLAWAVVDLP). At 548–614 (ETAGRTFIEI…GRSTPSVVNK (67 aa)) the chain is on the cytoplasmic side. Residues 594–614 (KEDLETSVVDEGRSTPSVVNK) form a disordered region.

It belongs to the major facilitator superfamily. Sugar transporter (TC 2.A.1.1) family.

It localises to the membrane. In terms of biological role, transporter for maltose. In Saccharomyces cerevisiae (Baker's yeast), this protein is Maltose permease MAL61 (MAL61).